The primary structure comprises 160 residues: Sulfur-rich protein (160 aa).

The next 2 helical transmembrane spans lie at 62-82 and 91-111; these read ITMV…TFVL and FLFL…SVFM.

Its subcellular location is the membrane. This is Sulfur-rich protein (srp) from Chlamydia caviae (strain ATCC VR-813 / DSM 19441 / 03DC25 / GPIC) (Chlamydophila caviae).